The primary structure comprises 619 residues: 1-deoxy-D-xylulose-5-phosphate synthase (619 aa).

Residues His-80 and 121–123 each bind thiamine diphosphate; that span reads GHS. Mg(2+) is bound at residue Asp-152. Thiamine diphosphate is bound by residues 153–154, Asn-181, Tyr-288, and Glu-370; that span reads GA. Asn-181 lines the Mg(2+) pocket.

The protein belongs to the transketolase family. DXPS subfamily. In terms of assembly, homodimer. Mg(2+) is required as a cofactor. It depends on thiamine diphosphate as a cofactor.

The catalysed reaction is D-glyceraldehyde 3-phosphate + pyruvate + H(+) = 1-deoxy-D-xylulose 5-phosphate + CO2. The protein operates within metabolic intermediate biosynthesis; 1-deoxy-D-xylulose 5-phosphate biosynthesis; 1-deoxy-D-xylulose 5-phosphate from D-glyceraldehyde 3-phosphate and pyruvate: step 1/1. Its function is as follows. Catalyzes the acyloin condensation reaction between C atoms 2 and 3 of pyruvate and glyceraldehyde 3-phosphate to yield 1-deoxy-D-xylulose-5-phosphate (DXP). This Yersinia pestis (strain Pestoides F) protein is 1-deoxy-D-xylulose-5-phosphate synthase.